Here is a 556-residue protein sequence, read N- to C-terminus: Polypeptide N-acetylgalactosaminyltransferase 13 (556 aa).

The Cytoplasmic segment spans residues 1–4; the sequence is MRRF. The helical; Signal-anchor for type II membrane protein transmembrane segment at 5-27 threads the bilayer; that stretch reads VYCKVVLATSLMWVLVDVFLLLY. At 28–556 the chain is on the lumenal side; it reads FSECNKCDDK…WLLRNMTLGT (529 aa). Asn94 and Asn116 each carry an N-linked (GlcNAc...) asparagine glycan. Intrachain disulfides connect Cys105-Cys338, Cys329-Cys407, Cys441-Cys458, Cys481-Cys496, and Cys522-Cys539. A catalytic subdomain A region spans residues 114–224; sequence LPNTSVVIVF…LGWLEPLLAR (111 aa). Positions 155 and 185 each coordinate substrate. The Mn(2+) site is built by Asp208 and His210. Positions 284-346 are catalytic subdomain B; the sequence is PVRTPTMAGG…TCSHVGHVFR (63 aa). Trp315 lines the substrate pocket. Residue His343 participates in Mn(2+) binding. The substrate site is built by Arg346 and Tyr351. The region spanning 428 to 550 is the Ricin B-type lectin domain; that stretch reads YSLGEIRNVE…GSRSQQWLLR (123 aa). N-linked (GlcNAc...) asparagine glycosylation is present at Asn551.

This sequence belongs to the glycosyltransferase 2 family. GalNAc-T subfamily. Mn(2+) is required as a cofactor. As to expression, specifically expressed in neuronal cells. Not expressed in glial cells such as astrocytes. Expressed at low level.

It localises to the golgi apparatus membrane. It catalyses the reaction L-seryl-[protein] + UDP-N-acetyl-alpha-D-galactosamine = a 3-O-[N-acetyl-alpha-D-galactosaminyl]-L-seryl-[protein] + UDP + H(+). It carries out the reaction L-threonyl-[protein] + UDP-N-acetyl-alpha-D-galactosamine = a 3-O-[N-acetyl-alpha-D-galactosaminyl]-L-threonyl-[protein] + UDP + H(+). It functions in the pathway protein modification; protein glycosylation. Its function is as follows. Catalyzes the initial reaction in O-linked oligosaccharide biosynthesis, the transfer of an N-acetyl-D-galactosamine (GalNAc) residue from UDP-GalNAc to a serine or threonine residue on the protein receptor. Generates GalNAc-O-Ser/Thr structure also known as Tn antigen, which itself is immunogenic but also serves as a precursor for the synthesis of different mucin-type O-glycan core structures. Contributes to the synthesis of O-linked glycans on mucins and proteoglycans of the central nervous system. Can glycosylate both unmodified peptides and glycopeptides that already contain an O-linked GalNAc sugar. Transfers GalNAc to Thr-/Ser-rich tandem repeats GTTPSPVPTTSTTSAP of MUC5AC. Transfers GalNAc to three consecutive serine/threonine residues on SDC3 forming a triplet-Tn epitope expressed in Purkinje cells of the developing brain. May promote neurogenesis through glycosylation and stabilization of PDPN. This chain is Polypeptide N-acetylgalactosaminyltransferase 13 (Galnt13), found in Mus musculus (Mouse).